The sequence spans 130 residues: Single-stranded DNA-binding protein 1 (130 aa).

Positions 1-104 (MINNVVLIGR…VVAESFQILE (104 aa)) constitute an SSB domain. Residues 108–130 (NTANTSSLADSMPDYGPEPDLPF) are disordered.

As to quaternary structure, homotetramer.

In Streptococcus pyogenes serotype M18 (strain MGAS8232), this protein is Single-stranded DNA-binding protein 1 (ssb1).